A 115-amino-acid chain; its full sequence is MLPSGQNVRVWIATGHTDMRCGFPSLALRVQEVLKLNPLDGNLFVFRGRSGSLLKVIWSDGQGSCLFTKRLDRGRFVWPSAEGGAIAISPAQLSYLLSGIDWRHPQETWRPTKVG.

Belongs to the transposase 34 family.

This is an uncharacterized protein from Sinorhizobium fredii (strain NBRC 101917 / NGR234).